Consider the following 356-residue polypeptide: DNA integrity scanning protein DisA (356 aa).

The DAC domain occupies 7 to 147; sequence NKNMLYALKM…EKYVVEDISK (141 aa). ATP contacts are provided by residues Gly74, Leu92, and 105 to 109; that span reads TRHRT.

Belongs to the DisA family. As to quaternary structure, homooctamer. Requires Mg(2+) as cofactor.

The catalysed reaction is 2 ATP = 3',3'-c-di-AMP + 2 diphosphate. Participates in a DNA-damage check-point that is active prior to asymmetric division when DNA is damaged. DisA forms globular foci that rapidly scan along the chromosomes during sporulation, searching for lesions. When a lesion is present, DisA pauses at the lesion site. This triggers a cellular response that culminates in a temporary block in sporulation initiation. Functionally, also has diadenylate cyclase activity, catalyzing the condensation of 2 ATP molecules into cyclic di-AMP (c-di-AMP). c-di-AMP acts as a signaling molecule that couples DNA integrity with progression of sporulation. The rise in c-di-AMP level generated by DisA while scanning the chromosome, operates as a positive signal that advances sporulation; upon encountering a lesion, the DisA focus arrests at the damaged site and halts c-di-AMP synthesis. The sequence is that of DNA integrity scanning protein DisA from Clostridioides difficile (strain 630) (Peptoclostridium difficile).